The sequence spans 88 residues: Toxin RelE2 (88 aa).

Belongs to the RelE toxin family.

Functionally, toxic component of a type II toxin-antitoxin (TA) system. Its toxic effect is neutralized by coexpression with cognate antitoxin RelB2 but no other ParD or RelB antitoxin. This chain is Toxin RelE2 (relE2), found in Caulobacter vibrioides (strain ATCC 19089 / CIP 103742 / CB 15) (Caulobacter crescentus).